We begin with the raw amino-acid sequence, 183 residues long: Translation initiation factor IF-3 (183 aa).

Belongs to the IF-3 family. In terms of assembly, monomer.

Its subcellular location is the cytoplasm. IF-3 binds to the 30S ribosomal subunit and shifts the equilibrium between 70S ribosomes and their 50S and 30S subunits in favor of the free subunits, thus enhancing the availability of 30S subunits on which protein synthesis initiation begins. The protein is Translation initiation factor IF-3 of Serratia marcescens.